The chain runs to 464 residues: Chromosomal replication initiator protein DnaA (464 aa).

Positions 1–82 (MSLSLWQQCL…LLRFEVGSKP (82 aa)) are domain I, interacts with DnaA modulators. Positions 82–127 (PITQVISQTVTASVSSAPAAPAARTAAPSRPSWDNAAAQPELSYRS) are domain II. Residues 98-113 (APAAPAARTAAPSRPS) are compositionally biased toward low complexity. The disordered stretch occupies residues 98–117 (APAAPAARTAAPSRPSWDNA). The interval 128–344 (NVNPKHTFDN…GALNRVIANA (217 aa)) is domain III, AAA+ region. The ATP site is built by G172, G174, K175, and T176. Positions 345-464 (NFTGRAITID…FSNLIRTLSS (120 aa)) are domain IV, binds dsDNA.

The protein belongs to the DnaA family. As to quaternary structure, oligomerizes as a right-handed, spiral filament on DNA at oriC.

Its subcellular location is the cytoplasm. Functionally, plays an important role in the initiation and regulation of chromosomal replication. Binds to the origin of replication; it binds specifically double-stranded DNA at a 9 bp consensus (dnaA box): 5'-TTATC[CA]A[CA]A-3'. DnaA binds to ATP and to acidic phospholipids. DnaA can inhibit its own gene expression as well as that of other genes. Its function is as follows. Plays an essential role in the initiation and regulation of chromosomal replication. ATP-DnaA binds to the origin of replication (oriC) to initiate formation of the DNA replication initiation complex once per cell cycle. Binds the DnaA box (a 9 base pair repeat at the origin) and separates the double-stranded (ds)DNA. Forms a right-handed helical filament on oriC DNA; dsDNA binds to the exterior of the filament while single-stranded (ss)DNA is stabiized in the filament's interior. The ATP-DnaA-oriC complex binds and stabilizes one strand of the AT-rich DNA unwinding element (DUE), permitting loading of DNA polymerase. After initiation quickly degrades to an ADP-DnaA complex that is not apt for DNA replication. Binds acidic phospholipids. This Serratia marcescens protein is Chromosomal replication initiator protein DnaA.